Here is a 620-residue protein sequence, read N- to C-terminus: Chaperone protein HscA homolog (620 aa).

It belongs to the heat shock protein 70 family.

Its function is as follows. Chaperone involved in the maturation of iron-sulfur cluster-containing proteins. Has a low intrinsic ATPase activity which is markedly stimulated by HscB. This is Chaperone protein HscA homolog from Pasteurella multocida (strain Pm70).